Here is a 210-residue protein sequence, read N- to C-terminus: Probable septum site-determining protein MinC (210 aa).

This sequence belongs to the MinC family. In terms of assembly, interacts with MinD and FtsZ.

Functionally, cell division inhibitor that blocks the formation of polar Z ring septums. Rapidly oscillates between the poles of the cell to destabilize FtsZ filaments that have formed before they mature into polar Z rings. Prevents FtsZ polymerization. This chain is Probable septum site-determining protein MinC, found in Thermotoga neapolitana (strain ATCC 49049 / DSM 4359 / NBRC 107923 / NS-E).